We begin with the raw amino-acid sequence, 483 residues long: Cysteine--tRNA ligase (483 aa).

C29 contributes to the Zn(2+) binding site. The short motif at 31–41 (PTVYGHAHLGH) is the 'HIGH' region element. Positions 221, 246, and 250 each coordinate Zn(2+). Positions 278-282 (KMGKS) match the 'KMSKS' region motif. K281 contributes to the ATP binding site.

It belongs to the class-I aminoacyl-tRNA synthetase family. Monomer. It depends on Zn(2+) as a cofactor.

Its subcellular location is the cytoplasm. The enzyme catalyses tRNA(Cys) + L-cysteine + ATP = L-cysteinyl-tRNA(Cys) + AMP + diphosphate. The chain is Cysteine--tRNA ligase from Chlorobium luteolum (strain DSM 273 / BCRC 81028 / 2530) (Pelodictyon luteolum).